A 223-amino-acid chain; its full sequence is Prolactin-3D4 (223 aa).

The signal sequence occupies residues 1–28 (MQLTLTLSGSSMQLLLLVSNLLLWENMA). 2 cysteine pairs are disulfide-bonded: Cys-80-Cys-198 and Cys-215-Cys-223. Asn-108 and Asn-157 each carry an N-linked (GlcNAc...) asparagine glycan.

Belongs to the somatotropin/prolactin family. In terms of processing, N-glycosylated.

The protein resides in the secreted. The sequence is that of Prolactin-3D4 (Prl3d4) from Rattus norvegicus (Rat).